A 970-amino-acid polypeptide reads, in one-letter code: Translation initiation factor IF-2 (970 aa).

Disordered stretches follow at residues 54–270 (KILA…TATQ) and 328–348 (DKRRGRTPGRPMSEEQAKSLS). Over residues 87–96 (QEAQPVEAQP) the composition is skewed to low complexity. The segment covering 98–112 (YEEQPSYEEQPSYEE) has biased composition (polar residues). The segment covering 121 to 149 (EVAAEAAPEPVEEPASSPEGGAPAGGAEP) has biased composition (low complexity). 2 stretches are compositionally biased toward pro residues: residues 150–160 (QPAPEAPPPSA) and 168–182 (PSAPPSPAVRPPAPS). Residues 183 to 253 (VPAGAQPPGA…PHGPGAQPGQ (71 aa)) are compositionally biased toward low complexity. Positions 469–638 (IRPPVVTVMG…ALQSEVLELK (170 aa)) constitute a tr-type G domain. The segment at 478–485 (GHVDHGKT) is G1. 478 to 485 (GHVDHGKT) is a GTP binding site. The G2 stretch occupies residues 503–507 (GITQH). The segment at 524 to 527 (DTPG) is G3. Residues 524-528 (DTPGH) and 578-581 (NKID) contribute to the GTP site. The G4 stretch occupies residues 578–581 (NKID). The interval 614–616 (SAR) is G5.

Belongs to the TRAFAC class translation factor GTPase superfamily. Classic translation factor GTPase family. IF-2 subfamily.

Its subcellular location is the cytoplasm. Its function is as follows. One of the essential components for the initiation of protein synthesis. Protects formylmethionyl-tRNA from spontaneous hydrolysis and promotes its binding to the 30S ribosomal subunits. Also involved in the hydrolysis of GTP during the formation of the 70S ribosomal complex. This Anaeromyxobacter sp. (strain Fw109-5) protein is Translation initiation factor IF-2.